A 166-amino-acid chain; its full sequence is Glutamyl-tRNA(Gln) amidotransferase subunit C-2, mitochondrial (166 aa).

The protein belongs to the GatC family. Subunit of the heterotrimeric GatCAB amidotransferase (AdT) complex, composed of A, B and C subunits.

The protein localises to the mitochondrion. It catalyses the reaction L-glutamyl-tRNA(Gln) + L-glutamine + ATP + H2O = L-glutaminyl-tRNA(Gln) + L-glutamate + ADP + phosphate + H(+). In terms of biological role, allows the formation of correctly charged Gln-tRNA(Gln) through the transamidation of misacylated Glu-tRNA(Gln) in the mitochondria. The reaction takes place in the presence of glutamine and ATP through an activated gamma-phospho-Glu-tRNA(Gln). In Culex quinquefasciatus (Southern house mosquito), this protein is Glutamyl-tRNA(Gln) amidotransferase subunit C-2, mitochondrial.